The following is a 408-amino-acid chain: Peptidase T (408 aa).

Position 78 (H78) interacts with Zn(2+). D80 is an active-site residue. D140 lines the Zn(2+) pocket. E173 serves as the catalytic Proton acceptor. Zn(2+)-binding residues include E174, D196, and H379.

It belongs to the peptidase M20B family. Zn(2+) serves as cofactor.

It localises to the cytoplasm. It carries out the reaction Release of the N-terminal residue from a tripeptide.. In terms of biological role, cleaves the N-terminal amino acid of tripeptides. This is Peptidase T from Shigella flexneri serotype 5b (strain 8401).